The following is a 579-amino-acid chain: Nif-specific regulatory protein (579 aa).

The region spanning 40-187 (DPVAEVPQIF…MVASLLEQAL (148 aa)) is the GAF domain. Residues 226 to 454 (IVGSSPAIAE…LENCVNRAAA (229 aa)) form the Sigma-54 factor interaction domain. ATP-binding positions include 254-261 (GESGTGKE) and 317-326 (ADGGTLFLDE). The inter-domain linker stretch occupies residues 464–536 (EELACRQGAC…PLRTKTAQLS (73 aa)). The a divalent metal cation site is built by Cys-468 and Cys-473. Residues 502-529 (RVSAPPPEPAPAPEPAPEAPPREEVPLR) form a disordered region. 7 repeat units span residues 505–506 (AP), 507–508 (PP), 509–510 (EP), 511–512 (AP), 513–514 (AP), 515–516 (EP), and 517–518 (AP). A 7 X 2 AA tandem repeats of X-P region spans residues 505–518 (APPPEPAPAPEPAP). Over residues 505–520 (APPPEPAPAPEPAPEA) the composition is skewed to pro residues. Residues 537-579 (REELLRALESAGWVQAKAARLLGMTPRQIAYALQKFEIELRKI) form a C-terminal DNA-binding domain region. The H-T-H motif DNA-binding region spans 551 to 570 (QAKAARLLGMTPRQIAYALQ).

As to quaternary structure, interacts with sigma-54.

Required for activation of most nif operons, which are directly involved in nitrogen fixation. The sequence is that of Nif-specific regulatory protein (nifA1) from Rhodobacter capsulatus (strain ATCC BAA-309 / NBRC 16581 / SB1003).